Consider the following 123-residue polypeptide: Large ribosomal subunit protein uL18 (123 aa).

It belongs to the universal ribosomal protein uL18 family. As to quaternary structure, part of the 50S ribosomal subunit; part of the 5S rRNA/L5/L18/L25 subcomplex. Contacts the 5S and 23S rRNAs.

This is one of the proteins that bind and probably mediate the attachment of the 5S RNA into the large ribosomal subunit, where it forms part of the central protuberance. The protein is Large ribosomal subunit protein uL18 of Wolbachia pipientis subsp. Culex pipiens (strain wPip).